Reading from the N-terminus, the 430-residue chain is Putative golgin subfamily A member 8D (430 aa).

Residues 2–217 (EWKLEQSMRE…LTAQLSLMAL (216 aa)) adopt a coiled-coil conformation. Disordered stretches follow at residues 138–158 (LREQEERLQEQQERLPEQEER), 217–239 (LPGEGHGGEHLDSEGEEAPRPMP), 290–331 (PITK…GVAA), and 382–406 (PVQGEAREGSPHDNPTAQPIVQDHQ). The span at 222–235 (HGGEHLDSEGEEAP) shows a compositional bias: basic and acidic residues. Over residues 303–316 (PGGGHHQAGPGQGG) the composition is skewed to gly residues.

The protein belongs to the GOLGA8 family.

This Homo sapiens (Human) protein is Putative golgin subfamily A member 8D (GOLGA8DP).